The primary structure comprises 516 residues: MNNQVIIFDTTLRDGEQALSASLTVKEKLQIAYALERLGVDIIEAGFPVSSPGDFESVQTIAKNIKNSRVCALSRAVAKDIDAAAEALKVAEAFRIHTFISTSTIHVQDKLRRSYDDVVAMAVKAVKHARQYTDDVEFSCEDAGRTPIDNLCRMVEAAINAGARTINIPDTVGYTVPSEFGGIIQTLFNRVPNIDKAIISVHCHDDLGMSVANSIAAIQAGARQVEGTINGIGERAGNCALEEIAMIIKTRQELLGVTTGIKHDEISRTSKLVSQLCNMPIQSNKAIVGANAFSHSSGIHQDGMLKNKNTYEIMTPESIGLKNQALNLTSRSGRAAVKSHMDSMGYNENEYNLDALYEDFLKLADRKGQVFDYDLEALMHFSNLREEDDFYKLNYLSVQSGSVMATTSIKLLCGGEEKCEAAVGNGPVDALYQCIYRITGYEIVLDKFDLTAKGEGEDGLGQADIIANYKGRKYHGTGVSTDIVEASGQALLHVINSIHRADQIAQIKQKKSVATV.

The Pyruvate carboxyltransferase domain occupies 5–267; sequence VIIFDTTLRD…TTGIKHDEIS (263 aa). Asp14, His202, His204, and Asn238 together coordinate Mn(2+). Residues 392–516 are regulatory domain; the sequence is KLNYLSVQSG…IKQKKSVATV (125 aa).

Belongs to the alpha-IPM synthase/homocitrate synthase family. LeuA type 1 subfamily. As to quaternary structure, homodimer. Mn(2+) is required as a cofactor.

The protein resides in the cytoplasm. It carries out the reaction 3-methyl-2-oxobutanoate + acetyl-CoA + H2O = (2S)-2-isopropylmalate + CoA + H(+). It functions in the pathway amino-acid biosynthesis; L-leucine biosynthesis; L-leucine from 3-methyl-2-oxobutanoate: step 1/4. Catalyzes the condensation of the acetyl group of acetyl-CoA with 3-methyl-2-oxobutanoate (2-ketoisovalerate) to form 3-carboxy-3-hydroxy-4-methylpentanoate (2-isopropylmalate). The sequence is that of 2-isopropylmalate synthase from Vibrio cholerae serotype O1 (strain ATCC 39315 / El Tor Inaba N16961).